Here is a 450-residue protein sequence, read N- to C-terminus: Hyaluronidase-1 (450 aa).

A signal peptide spans 1–35; that stretch reads MRPFSLEVSLHLPWAMAAHLLPVCTLFLNLLSMTQ. 2 cysteine pairs are disulfide-bonded: Cys58-Cys348 and Cys222-Cys236. Asn85 is a glycosylation site (N-linked (GlcNAc...) asparagine). Glu146 functions as the Proton donor in the catalytic mechanism. 2 N-linked (GlcNAc...) asparagine glycosylation sites follow: Asn231 and Asn365. 3 disulfides stabilise this stretch: Cys373–Cys384, Cys378–Cys433, and Cys435–Cys444. Residue Asn398 is glycosylated (N-linked (GlcNAc...) asparagine). The EGF-like domain occupies 433-444; it reads CRCYRGWRGTRC.

This sequence belongs to the glycosyl hydrolase 56 family.

The protein resides in the secreted. Its subcellular location is the lysosome. It carries out the reaction Random hydrolysis of (1-&gt;4)-linkages between N-acetyl-beta-D-glucosamine and D-glucuronate residues in hyaluronate.. Its function is as follows. May have a role in promoting tumor progression. May block the TGFB1-enhanced cell growth. This is Hyaluronidase-1 (HYAL1) from Bos taurus (Bovine).